Here is a 778-residue protein sequence, read N- to C-terminus: DEK domain-containing chromatin-associated protein 4 (778 aa).

Disordered stretches follow at residues 1–334 (MGEE…RPVR) and 475–689 (LVNE…PSDE). Positions 14 to 26 (ANGTSSLQKTSDA) are enriched in polar residues. Composition is skewed to basic and acidic residues over residues 40–95 (EVQE…PEAD), 121–153 (AVMKESVESADNKDAENPEGEQEKESKEEKLEG), 165–185 (EEKLVGGDKGDDVDEAEKVEN), and 209–243 (TNKGEEVKEANKEDDVEADTKVAEPEVEDKKTESK). A coiled-coil region spans residues 191–300 (KEEALKEKNE…KEDIKKSNKR (110 aa)). Acidic residues predominate over residues 244 to 286 (DENEDKEEEKEDEKEESMDDKEDEKEESNDDDKEDEKEESNDD). Basic and acidic residues-rich tracts occupy residues 287–296 (KEDKKEDIKK) and 303–323 (GKTEKTRGKTKSDEEKKDIEP). The Nuclear localization signal 1 signature appears at 289–296 (DKKEDIKK). The Nuclear localization signal 2 signature appears at 489–496 (PKKSSPAA). Positions 491–502 (KSSPAAGSSSSK) are enriched in low complexity. A coiled-coil region spans residues 526–587 (DDESEEEKED…EESEEETKKK (62 aa)). Composition is skewed to acidic residues over residues 527 to 553 (DESEEEKEDDEEEEKEQEVEEEEEENE) and 560 to 582 (SEDEAPQLSESEENVESEEESEE). Residues 618 to 625 (PKKATQKR) carry the Nuclear localization signal 3 motif. Positions 621-631 (ATQKRSAGKRK) are enriched in basic residues. Residues 678 to 689 (KGKDKNKEPSDE) are compositionally biased toward basic and acidic residues. The 56-residue stretch at 685 to 740 (EPSDEELKTAIIDILKGVDFNTATFTDILKRLDAKFNISLASKKSSIKRMIQDELT) folds into the DEK-C domain. DNA-binding regions lie at residues 703–717 (DFNTATFTDILKRLD) and 732–736 (KRMIQ). The stretch at 732–766 (KRMIQDELTKLADEAEDEEGEEEDAEHEEEEEKEK) forms a coiled coil. The segment at 741–778 (KLADEAEDEEGEEEDAEHEEEEEKEKAKGSGGGEEVKA) is disordered. Acidic residues predominate over residues 745-763 (EAEDEEGEEEDAEHEEEEE). Basic and acidic residues predominate over residues 764-778 (KEKAKGSGGGEEVKA).

As to quaternary structure, interacts with DEK3.

It is found in the nucleus. The protein localises to the nucleolus. In terms of biological role, chromatin-associated protein which contributes to the modulation of chromatin structure (such as super-helical structure of DNA) and function. Binds to chromatin of protein-coding genes throughout the genome to regulate nucleosome occupancy and chromatin accessibility, and to modulate the expression of target genes. The polypeptide is DEK domain-containing chromatin-associated protein 4 (Arabidopsis thaliana (Mouse-ear cress)).